The chain runs to 372 residues: Glutamate 5-kinase (372 aa).

Position 14 (lysine 14) interacts with ATP. Substrate is bound by residues serine 54, aspartate 141, and asparagine 153. 173-174 (TD) serves as a coordination point for ATP. The PUA domain maps to 280–358 (RGTLVLDEGA…DAIVGVLGYM (79 aa)).

It belongs to the glutamate 5-kinase family.

Its subcellular location is the cytoplasm. It carries out the reaction L-glutamate + ATP = L-glutamyl 5-phosphate + ADP. It functions in the pathway amino-acid biosynthesis; L-proline biosynthesis; L-glutamate 5-semialdehyde from L-glutamate: step 1/2. Functionally, catalyzes the transfer of a phosphate group to glutamate to form L-glutamate 5-phosphate. The sequence is that of Glutamate 5-kinase from Pseudomonas fluorescens (strain ATCC BAA-477 / NRRL B-23932 / Pf-5).